Here is a 481-residue protein sequence, read N- to C-terminus: UDP-N-acetylmuramoyl-L-alanyl-D-glutamate--L-lysine ligase (481 aa).

Serine 42 serves as a coordination point for UDP-N-acetyl-alpha-D-muramoyl-L-alanyl-D-glutamate. 118–124 (GTKGKTT) lines the ATP pocket. UDP-N-acetyl-alpha-D-muramoyl-L-alanyl-D-glutamate is bound by residues glutamine 158, 160–161 (TT), serine 187, and arginine 195. At lysine 229 the chain carries N6-carboxylysine. Positions 404-407 (DDPN) match the L-lysine recognition motif motif.

This sequence belongs to the MurCDEF family. MurE subfamily. Post-translationally, carboxylation is probably crucial for Mg(2+) binding and, consequently, for the gamma-phosphate positioning of ATP.

The protein resides in the cytoplasm. It catalyses the reaction UDP-N-acetyl-alpha-D-muramoyl-L-alanyl-D-glutamate + L-lysine + ATP = UDP-N-acetyl-alpha-D-muramoyl-L-alanyl-gamma-D-glutamyl-L-lysine + ADP + phosphate + H(+). It participates in cell wall biogenesis; peptidoglycan biosynthesis. Catalyzes the addition of L-lysine to the nucleotide precursor UDP-N-acetylmuramoyl-L-alanyl-D-glutamate (UMAG) in the biosynthesis of bacterial cell-wall peptidoglycan. The sequence is that of UDP-N-acetylmuramoyl-L-alanyl-D-glutamate--L-lysine ligase from Streptococcus pyogenes serotype M28 (strain MGAS6180).